We begin with the raw amino-acid sequence, 191 residues long: Outer membrane lipoprotein DolP (191 aa).

A signal peptide spans 1 to 18; sequence MKAFSPLAVLISALLLQG. The N-palmitoyl cysteine moiety is linked to residue Cys-19. A lipid anchor (S-diacylglycerol cysteine) is attached at Cys-19. BON domains are found at residues 46 to 115 and 124 to 191; these read DDGT…RQGQ and NDTW…TYIK.

This sequence belongs to the lipoprotein DolP family.

It localises to the cell outer membrane. Plays an important role in maintaining outer membrane integrity. Contributes to virulence. The protein is Outer membrane lipoprotein DolP of Salmonella typhimurium (strain LT2 / SGSC1412 / ATCC 700720).